The following is a 194-amino-acid chain: Fibroblast growth factor 7 (194 aa).

The first 31 residues, 1 to 31, serve as a signal peptide directing secretion; sequence MHKWILTWILPTLLYRSCFHIICLVGTISLA. Asn-45 carries an N-linked (GlcNAc...) asparagine glycan.

Belongs to the heparin-binding growth factors family. In terms of assembly, interacts with FGFBP1. Interacts with FGFR2. Affinity between fibroblast growth factors (FGFs) and their receptors is increased by heparan sulfate glycosaminoglycans that function as coreceptors. In terms of tissue distribution, epithelial cell.

It is found in the secreted. Plays an important role in the regulation of embryonic development, cell proliferation and cell differentiation. Required for normal branching morphogenesis. Growth factor active on keratinocytes. Possible major paracrine effector of normal epithelial cell proliferation. The sequence is that of Fibroblast growth factor 7 (FGF7) from Homo sapiens (Human).